Here is a 361-residue protein sequence, read N- to C-terminus: Cilia- and flagella-associated protein 263 (361 aa).

Belongs to the CFAP263 family. Forms a complex with CFAP184; the interaction is required for functional activity in cilia.

The protein resides in the cell projection. Its subcellular location is the cilium. In terms of biological role, in complex with CFAP263, acts as a regulator of ciliary beating that connects radial spoke 3 (RS3) to the inner dynein arm (IDA) and the nexin-dynein regulatory complex (N-DRC). The complex is positioned parallel to N-DRC and forms a connection between the arch at the base of RS3, the IDA tail and N-DRC. The chain is Cilia- and flagella-associated protein 263 (CFAP263) from Tetrahymena thermophila (strain SB210).